The primary structure comprises 435 residues: Adenylosuccinate synthetase (435 aa).

Residues G12–K18 and G40–T42 contribute to the GTP site. D13 functions as the Proton acceptor in the catalytic mechanism. The Mg(2+) site is built by D13 and G40. Residues D13–K16, N38–H41, T130, R144, Q224, T239, and R301 each bind IMP. The active-site Proton donor is the H41. Substrate is bound at residue T297–R303. GTP contacts are provided by residues R303, K329 to D331, and S411 to G413.

Belongs to the adenylosuccinate synthetase family. Homodimer. Mg(2+) serves as cofactor.

The protein localises to the cytoplasm. It catalyses the reaction IMP + L-aspartate + GTP = N(6)-(1,2-dicarboxyethyl)-AMP + GDP + phosphate + 2 H(+). The protein operates within purine metabolism; AMP biosynthesis via de novo pathway; AMP from IMP: step 1/2. Its function is as follows. Plays an important role in the de novo pathway of purine nucleotide biosynthesis. Catalyzes the first committed step in the biosynthesis of AMP from IMP. The polypeptide is Adenylosuccinate synthetase (Wolbachia sp. subsp. Brugia malayi (strain TRS)).